A 375-amino-acid polypeptide reads, in one-letter code: Methylthioribose-1-phosphate isomerase (375 aa).

Catalysis depends on Asp-257, which acts as the Proton donor.

This sequence belongs to the eIF-2B alpha/beta/delta subunits family. MtnA subfamily.

It is found in the cytoplasm. The protein resides in the nucleus. It catalyses the reaction 5-(methylsulfanyl)-alpha-D-ribose 1-phosphate = 5-(methylsulfanyl)-D-ribulose 1-phosphate. Its pathway is amino-acid biosynthesis; L-methionine biosynthesis via salvage pathway; L-methionine from S-methyl-5-thio-alpha-D-ribose 1-phosphate: step 1/6. Functionally, catalyzes the interconversion of methylthioribose-1-phosphate (MTR-1-P) into methylthioribulose-1-phosphate (MTRu-1-P). In Leishmania infantum, this protein is Methylthioribose-1-phosphate isomerase.